The following is a 676-amino-acid chain: Ion-translocating oxidoreductase complex subunit C (676 aa).

4Fe-4S ferredoxin-type domains are found at residues 369–397 (GEPQEEQNCIRCSACADACPADLLPQQLY) and 407–436 (KATTHNIADCIECGACAWVCPSNIPLVQYF). [4Fe-4S] cluster contacts are provided by cysteine 377, cysteine 380, cysteine 383, cysteine 387, cysteine 416, cysteine 419, cysteine 422, and cysteine 426. The interval 600-652 (ARKLEQQQANAEPEQQVDPRKAAVEAAIARAKARKLEQQQANAEPEEQVDPRK) is disordered. A compositionally biased stretch (low complexity) spans 605–615 (QQQANAEPEQQ).

It belongs to the 4Fe4S bacterial-type ferredoxin family. RnfC subfamily. The complex is composed of six subunits: RsxA, RsxB, RsxC, RsxD, RsxE and RsxG. Requires [4Fe-4S] cluster as cofactor.

Its subcellular location is the cell inner membrane. Its function is as follows. Part of a membrane-bound complex that couples electron transfer with translocation of ions across the membrane. Required to maintain the reduced state of SoxR. This is Ion-translocating oxidoreductase complex subunit C from Escherichia coli (strain SMS-3-5 / SECEC).